Consider the following 105-residue polypeptide: Large ribosomal subunit protein eL36 (105 aa).

Lys62 is modified (N6-acetyllysine).

The protein belongs to the eukaryotic ribosomal protein eL36 family. As to quaternary structure, component of the large ribosomal subunit.

The protein localises to the cytoplasm. It is found in the cytosol. Component of the large ribosomal subunit. The ribosome is a large ribonucleoprotein complex responsible for the synthesis of proteins in the cell. This Rattus norvegicus (Rat) protein is Large ribosomal subunit protein eL36 (Rpl36).